The primary structure comprises 701 residues: Elongation factor G (701 aa).

In terms of domain architecture, tr-type G spans 11–287 (TKVRNIGIMA…AVIDYLPSPL (277 aa)). GTP is bound by residues 20 to 27 (AHIDAGKT), 84 to 88 (DTPGH), and 138 to 141 (NKMD).

Belongs to the TRAFAC class translation factor GTPase superfamily. Classic translation factor GTPase family. EF-G/EF-2 subfamily.

The protein resides in the cytoplasm. In terms of biological role, catalyzes the GTP-dependent ribosomal translocation step during translation elongation. During this step, the ribosome changes from the pre-translocational (PRE) to the post-translocational (POST) state as the newly formed A-site-bound peptidyl-tRNA and P-site-bound deacylated tRNA move to the P and E sites, respectively. Catalyzes the coordinated movement of the two tRNA molecules, the mRNA and conformational changes in the ribosome. This chain is Elongation factor G, found in Mycobacterium avium (strain 104).